The following is a 209-amino-acid chain: MADS-box transcription factor 2 (209 aa).

Residues 1-61 (MGRGKIEIKR…GKLYDYCSPK (61 aa)) form the MADS-box domain. A K-box domain is found at 84–170 (HKSLSAEIDR…AFKLHQQDIA (87 aa)).

As to expression, highly expressed in anthers and carpels. Expressed in pollen, tapetum and stigma.

The protein resides in the nucleus. Probable transcription factor involved in the development of floral organs. B-class protein required for normal development of lodicules (whorl 2). The sequence is that of MADS-box transcription factor 2 (MADS2) from Oryza sativa subsp. japonica (Rice).